The sequence spans 181 residues: I-Kappa-B like protein C2 (181 aa).

3 ANK repeats span residues 54–86 (DGKX…DINS), 91–121 (DGNT…DMEI), and 125–154 (ARKT…RCDV).

Belongs to the polydnaviridae I-Kappa-B-like protein family.

Functionally, suppresses the host immune response through NF-kappa-B inactivation. Possesses ankyrin repeat domains required for NF-kappa-B binding but lacks the regulatory regions required for dissociation from NF-kappa-B and degradation. Therefore, prevents host NF-kappa-B release and subsequent activation. This is I-Kappa-B like protein C2 (C2) from Microplitis demolitor (Parasitoid wasp).